We begin with the raw amino-acid sequence, 430 residues long: Serine--tRNA ligase (430 aa).

The interval 44-65 (TESLQAERNSRSKSIGAAKARG) is disordered. Residue 237–239 (TAE) participates in L-serine binding. ATP is bound at residue 268–270 (RSE). Residue Glu291 coordinates L-serine. 355 to 358 (EISS) serves as a coordination point for ATP. Ser391 is an L-serine binding site.

Belongs to the class-II aminoacyl-tRNA synthetase family. Type-1 seryl-tRNA synthetase subfamily. In terms of assembly, homodimer. The tRNA molecule binds across the dimer.

It localises to the cytoplasm. The catalysed reaction is tRNA(Ser) + L-serine + ATP = L-seryl-tRNA(Ser) + AMP + diphosphate + H(+). It catalyses the reaction tRNA(Sec) + L-serine + ATP = L-seryl-tRNA(Sec) + AMP + diphosphate + H(+). It participates in aminoacyl-tRNA biosynthesis; selenocysteinyl-tRNA(Sec) biosynthesis; L-seryl-tRNA(Sec) from L-serine and tRNA(Sec): step 1/1. Catalyzes the attachment of serine to tRNA(Ser). Is also able to aminoacylate tRNA(Sec) with serine, to form the misacylated tRNA L-seryl-tRNA(Sec), which will be further converted into selenocysteinyl-tRNA(Sec). This is Serine--tRNA ligase from Edwardsiella ictaluri (strain 93-146).